The primary structure comprises 601 residues: Translation initiation factor IF-2 (601 aa).

The tract at residues 54 to 101 (GHTASAEPAPAQASGSPASPAQTEAQEAPQPTATATAEREPAAPPARE) is disordered. A compositionally biased stretch (low complexity) spans 57-89 (ASAEPAPAQASGSPASPAQTEAQEAPQPTATAT). Residues 104 to 273 (HRAPVVTIMG…SLTAELEDLR (170 aa)) form the tr-type G domain. Positions 113–120 (GHVDHGKT) are G1. GTP is bound at residue 113-120 (GHVDHGKT). Positions 138–142 (GITQH) are G2. The G3 stretch occupies residues 159-162 (DTPG). GTP is bound by residues 159–163 (DTPGH) and 213–216 (NKVD). The interval 213 to 216 (NKVD) is G4. The G5 stretch occupies residues 249–251 (SAK).

The protein belongs to the TRAFAC class translation factor GTPase superfamily. Classic translation factor GTPase family. IF-2 subfamily.

Its subcellular location is the cytoplasm. In terms of biological role, one of the essential components for the initiation of protein synthesis. Protects formylmethionyl-tRNA from spontaneous hydrolysis and promotes its binding to the 30S ribosomal subunits. Also involved in the hydrolysis of GTP during the formation of the 70S ribosomal complex. In Deinococcus geothermalis (strain DSM 11300 / CIP 105573 / AG-3a), this protein is Translation initiation factor IF-2.